The primary structure comprises 436 residues: Tubulin epsilon and delta complex protein 2 (436 aa).

2 disordered regions span residues 53–76 and 94–191; these read ARTPSPVPETKEEDPSPACAPSSQ and VRKG…PSSA. Over residues 111 to 131 the composition is skewed to low complexity; that stretch reads TSKAATSGAAAASHPRAPSRG. Over residues 153–170 the composition is skewed to basic and acidic residues; the sequence is DYPEHRLRSKGDKTHVRT. At serine 161 the chain carries Phosphoserine.

In terms of assembly, interacts with TEDC1. Found in a complex with TEDC1, TEDC2, TUBE1 and TUBD1.

The protein localises to the cell projection. Its subcellular location is the cilium. It is found in the cytoplasm. The protein resides in the cytoskeleton. It localises to the microtubule organizing center. The protein localises to the centrosome. Its subcellular location is the centriole. In terms of biological role, acts as a positive regulator of ciliary hedgehog signaling. Required for centriole stability. This is Tubulin epsilon and delta complex protein 2 from Mus musculus (Mouse).